A 315-amino-acid chain; its full sequence is MACFRVILYLSVIFFVQCVFAAPKGITKVAPENHNFFGRITSYAHPKDVPDPVPMYQQFAALAQQSNCHNYHINISVGDATLLYSWGDNDRNQRLQLFHSKSLGIVASWAGMNPTKINSILGAADVFLVDVDRRYFPHAEKGAKLYKGFQDAYKRVAPTFIKELQYYQELYNEDRVSLTGLSYGAALANIALLHVKKNLKRGSIYRTVAFGLPRVGNQEWANSIDKHADGKFFYVANGNDLVVRAPPRELGYQHPSGQIWINPSNSSKWKFYPGQENVHGANSEFGYSIPDHTGVYFRTEIASLWGHCPATVGKD.

The first 21 residues, 1 to 21 (MACFRVILYLSVIFFVQCVFA), serve as a signal peptide directing secretion. An intrachain disulfide couples cysteine 68 to cysteine 308. The N-linked (GlcNAc...) asparagine glycan is linked to asparagine 74. Serine 182 functions as the Nucleophile in the catalytic mechanism. Residue aspartate 240 is part of the active site. An N-linked (GlcNAc...) asparagine glycan is attached at asparagine 265. Histidine 292 is a catalytic residue.

This sequence belongs to the AB hydrolase superfamily. Lipase family. Class 3 subfamily.

Its subcellular location is the secreted. It catalyses the reaction a monoacylglycerol + H2O = glycerol + a fatty acid + H(+). The enzyme catalyses a diacylglycerol + H2O = a monoacylglycerol + a fatty acid + H(+). Secreted lipase involved in Dandruff and seborrheic dermatitis (D/SD) probably via lipase-mediated breakdown of sebaceous lipids and release of irritating free fatty acids. Shows activity against monoglyceride and diglyceride substrates and generates free oleic acid from the substrates mono- and diolein. Able to cleave the oleic acid from both the 1 and the 2 position of the glycerol backbone as 1,2 isomers of diolein were converted into oleic acid and glycerol. Due to an absence of fatty acid synthase genes in Malassezia species, secretory lipases are essential for the yeast to generate free fatty acids from degradation of sebum and assimilate them as lipid sources for growth. Plays an essential role at the pathogen-host interface during disease progression. Also performs the reverse reaction to build diacylglycerols from monoacylglycerols. The protein is Secreted mono- and diacylglycerol lipase LIP2 of Malassezia restricta (Seborrheic dermatitis infection agent).